The following is a 214-amino-acid chain: Rac-like GTP-binding protein 2 (214 aa).

14–21 (GDGAVGKT) serves as a coordination point for GTP. Positions 36-44 (YIPTVFDNF) match the Effector region motif. Residues 61–65 (DTAGQ) and 119–122 (TKLD) contribute to the GTP site.

This sequence belongs to the small GTPase superfamily. Rho family. Post-translationally, may be palmitoylated.

The protein localises to the cytoplasm. The protein resides in the membrane. In terms of biological role, inactive GDP-bound Rho GTPases reside in the cytosol, are found in a complex with Rho GDP-dissociation inhibitors (Rho GDIs), and are released from the GDI protein in order to translocate to membranes upon activation. The sequence is that of Rac-like GTP-binding protein 2 (RAC2) from Oryza sativa subsp. japonica (Rice).